The sequence spans 522 residues: Peptide methionine sulfoxide reductase MsrA/MsrB (522 aa).

A Thioredoxin domain is found at 17 to 174 (LALGACSPKI…ALALIRDPNA (158 aa)). The cysteines at positions 68 and 71 are disulfide-linked. The interval 199-354 (RTIYLAGGCF…PNGYCHIDIR (156 aa)) is peptide methionine sulfoxide reductase A. Cys-207 is a catalytic residue. Positions 383–506 (DAELKRTLTE…NGASLKFIPL (124 aa)) constitute a MsrB domain. Cys-440 and Cys-495 form a disulfide bridge. Cys-495 functions as the Nucleophile in the catalytic mechanism.

It in the N-terminal section; belongs to the thioredoxin family. This sequence in the central section; belongs to the MsrA Met sulfoxide reductase family. In the C-terminal section; belongs to the MsrB Met sulfoxide reductase family.

The catalysed reaction is L-methionyl-[protein] + [thioredoxin]-disulfide + H2O = L-methionyl-(S)-S-oxide-[protein] + [thioredoxin]-dithiol. It catalyses the reaction [thioredoxin]-disulfide + L-methionine + H2O = L-methionine (S)-S-oxide + [thioredoxin]-dithiol. The enzyme catalyses L-methionyl-[protein] + [thioredoxin]-disulfide + H2O = L-methionyl-(R)-S-oxide-[protein] + [thioredoxin]-dithiol. Has an important function as a repair enzyme for proteins that have been inactivated by oxidation. Catalyzes the reversible oxidation-reduction of methionine sulfoxide in proteins to methionine. This is Peptide methionine sulfoxide reductase MsrA/MsrB (msrAB) from Neisseria meningitidis serogroup B (strain ATCC BAA-335 / MC58).